The primary structure comprises 270 residues: Phosphatidate cytidylyltransferase (270 aa).

The next 7 membrane-spanning stretches (helical) occupy residues 19–39 (LWLT…IGLA), 53–73 (TAFS…LLIL), 76–96 (GALL…VTQW), 101–121 (GWPA…SLLR), 126–146 (FGFT…IAAY), 183–203 (LVAS…ALLL), and 248–268 (ALLY…AIFF).

It belongs to the CDS family.

The protein localises to the cell inner membrane. The catalysed reaction is a 1,2-diacyl-sn-glycero-3-phosphate + CTP + H(+) = a CDP-1,2-diacyl-sn-glycerol + diphosphate. Its pathway is phospholipid metabolism; CDP-diacylglycerol biosynthesis; CDP-diacylglycerol from sn-glycerol 3-phosphate: step 3/3. The chain is Phosphatidate cytidylyltransferase (cdsA) from Brucella melitensis biotype 1 (strain ATCC 23456 / CCUG 17765 / NCTC 10094 / 16M).